We begin with the raw amino-acid sequence, 121 residues long: MSRTKGGTVTHARHKKVIKAAKGYYGRRKSTFKVARQAVDKANQYATRDRKNRKRNFRALWIQRINAAVRSHDEALTYSRFINGLNLAGIEVDRKVLADLAVHEPEAFGAIVKQAQDALAA.

It belongs to the bacterial ribosomal protein bL20 family.

Binds directly to 23S ribosomal RNA and is necessary for the in vitro assembly process of the 50S ribosomal subunit. It is not involved in the protein synthesizing functions of that subunit. The chain is Large ribosomal subunit protein bL20 from Roseobacter denitrificans (strain ATCC 33942 / OCh 114) (Erythrobacter sp. (strain OCh 114)).